The primary structure comprises 216 residues: Ribosomal RNA small subunit methyltransferase G (216 aa).

Residues Gly83, Met88, 134–135 (VE), and Arg149 contribute to the S-adenosyl-L-methionine site.

It belongs to the methyltransferase superfamily. RNA methyltransferase RsmG family.

The protein localises to the cytoplasm. The enzyme catalyses guanosine(527) in 16S rRNA + S-adenosyl-L-methionine = N(7)-methylguanosine(527) in 16S rRNA + S-adenosyl-L-homocysteine. Functionally, specifically methylates the N7 position of guanine in position 527 of 16S rRNA. The polypeptide is Ribosomal RNA small subunit methyltransferase G (Pseudomonas putida (strain ATCC 700007 / DSM 6899 / JCM 31910 / BCRC 17059 / LMG 24140 / F1)).